The primary structure comprises 358 residues: 3'(2'),5'-bisphosphate nucleotidase 2 (358 aa).

Aspartate 54 (proton acceptor) is an active-site residue. 4 residues coordinate Mg(2+): glutamate 77, aspartate 141, isoleucine 143, and aspartate 144. Threonine 146 acts as the Proton acceptor in catalysis. Threonine 146, histidine 243, serine 272, lysine 275, arginine 289, and aspartate 302 together coordinate adenosine 3',5'-bisphosphate. 5 residues coordinate AMP: histidine 243, serine 272, lysine 275, arginine 289, and aspartate 302. Residue aspartate 302 participates in Mg(2+) binding.

The protein belongs to the inositol monophosphatase superfamily. Mg(2+) is required as a cofactor.

It catalyses the reaction 3'-phosphoadenylyl sulfate + H2O = adenosine 5'-phosphosulfate + phosphate. The enzyme catalyses adenosine 3',5'-bisphosphate + H2O = AMP + phosphate. The catalysed reaction is adenosine 2',5'-bisphosphate + H2O = AMP + phosphate. Functionally, phosphatase that converts adenosine 3'-phosphate 5'-phosphosulfate (PAPS) to adenosine 5'-phosphosulfate (APS) and 3'(2')-phosphoadenosine 5'-phosphate (PAP) to AMP. Regulates the flux of sulfur in the sulfur-activation pathway by converting PAPS to APS. Involved in salt tolerance. This Candida albicans (strain SC5314 / ATCC MYA-2876) (Yeast) protein is 3'(2'),5'-bisphosphate nucleotidase 2 (HAL22).